The following is a 172-amino-acid chain: Phosphopantetheine adenylyltransferase (172 aa).

Residue T14 coordinates substrate. ATP is bound by residues 14–15 (TF) and H22. 3 residues coordinate substrate: K46, L78, and R92. ATP-binding positions include 93–95 (GMR), E103, and 128–134 (WLYISST).

The protein belongs to the bacterial CoaD family. As to quaternary structure, homohexamer. The cofactor is Mg(2+).

It localises to the cytoplasm. It carries out the reaction (R)-4'-phosphopantetheine + ATP + H(+) = 3'-dephospho-CoA + diphosphate. The protein operates within cofactor biosynthesis; coenzyme A biosynthesis; CoA from (R)-pantothenate: step 4/5. Its function is as follows. Reversibly transfers an adenylyl group from ATP to 4'-phosphopantetheine, yielding dephospho-CoA (dPCoA) and pyrophosphate. The polypeptide is Phosphopantetheine adenylyltransferase (Solidesulfovibrio magneticus (strain ATCC 700980 / DSM 13731 / RS-1) (Desulfovibrio magneticus)).